The chain runs to 323 residues: GMP reductase (323 aa).

The active-site Thioimidate intermediate is the Cys174. 203-226 (IIADGGIRHNGDIAKSVRFGASMV) lines the NADP(+) pocket.

Belongs to the IMPDH/GMPR family. GuaC type 2 subfamily.

The enzyme catalyses IMP + NH4(+) + NADP(+) = GMP + NADPH + 2 H(+). Functionally, catalyzes the irreversible NADPH-dependent deamination of GMP to IMP. It functions in the conversion of nucleobase, nucleoside and nucleotide derivatives of G to A nucleotides, and in maintaining the intracellular balance of A and G nucleotides. This chain is GMP reductase, found in Oenococcus oeni (strain ATCC BAA-331 / PSU-1).